The following is a 200-amino-acid chain: Recombination protein RecR (200 aa).

The segment at 60 to 75 (CVYCQALTEDDVCNIC) adopts a C4-type zinc-finger fold. A Toprim domain is found at 83–177 (TKLCIIESML…KISRIGFGVP (95 aa)).

The protein belongs to the RecR family.

In terms of biological role, may play a role in DNA repair. It seems to be involved in an RecBC-independent recombinational process of DNA repair. It may act with RecF and RecO. In Francisella tularensis subsp. holarctica (strain OSU18), this protein is Recombination protein RecR.